Here is a 271-residue protein sequence, read N- to C-terminus: Secretagogin (271 aa).

EF-hand domains lie at leucine 8–lysine 43, lysine 53–asparagine 88, aspartate 100–glutamine 135, lysine 144–phenylalanine 179, glutamate 192–leucine 227, and valine 235–proline 271. The Ca(2+) site is built by aspartate 21, aspartate 23, asparagine 25, tyrosine 27, and glutamate 32. Ca(2+) contacts are provided by aspartate 113, aspartate 115, serine 117, glutamate 124, asparagine 159, aspartate 161, arginine 163, aspartate 168, aspartate 205, serine 207, threonine 209, glutamate 216, aspartate 249, asparagine 251, aspartate 253, lysine 255, and glutamate 260.

Its subcellular location is the cytoplasm. The chain is Secretagogin (scgn) from Xenopus laevis (African clawed frog).